The chain runs to 707 residues: MDANLRRKLDELPAEPGCYLMKDRAGEVVYVGKASSLRSRVRSYFDPGRGDQRAFVALLDELLGDLEVIVTRSEKEAVLLENELIKKHRPRFNVRLRDDKDFIVLKLDERHPYPRLEVRRAREKRQPGARYFGPYSSASSIRETLRMVNRHFQLRTCSDHVFDHRKRPCILYQIHRCPAPCVYEVAAEEYRQSVEDAVEFLEGREGELVERLRGRMAGAAEGLRFEEAARLRDQLQAVERSLEKQRVLMSDRGDRDVIGLYREGPDLVVQVLSMRAGKLQDAQAHPFREQEFPDEEILSSFLSLYYEHTDAPDEILVPLEPVQAEALADVLSERRGRRVRLLTPQRGAKADLLDVARRNAEQGFRAWHEHDERREQALAAVARALHLARPPRWMECYDISTFQGALAVGSGVSMKDGEPDKANYRRYKVKAVAGQDDFAMLHEVITRRLRRALGEGQLPDLIVIDGGKGQLNAALAAAKDLGVPTRPSPGNPDAPFVELVGLAKSRLVDGPSLGTARVVGRRGRRAEARLADAAEAAEKGFVSELARSPERVFLPGRKDPVVLRQNSAELFLLARLRDEAHRFAITFHRKLRRERNFQSVLEEIPGIGEGRKRALLRHFGALRRVREATPEEIAQVEGFGPRQAAAVHAFFHRPDAPPIAADEPSGAPAGAPGGGPAEASPEAVAAATEAEIDAALADEDASPEPAA.

Positions 14–94 (AEPGCYLMKD…IKKHRPRFNV (81 aa)) constitute a GIY-YIG domain. Residues 206 to 241 (GELVERLRGRMAGAAEGLRFEEAARLRDQLQAVERS) enclose the UVR domain. The tract at residues 655–707 (DAPPIAADEPSGAPAGAPGGGPAEASPEAVAAATEAEIDAALADEDASPEPAA) is disordered. Low complexity-rich tracts occupy residues 660 to 670 (AADEPSGAPAG) and 677 to 689 (AEASPEAVAAATE). Over residues 690–707 (AEIDAALADEDASPEPAA) the composition is skewed to acidic residues.

Belongs to the UvrC family. Interacts with UvrB in an incision complex.

It is found in the cytoplasm. Its function is as follows. The UvrABC repair system catalyzes the recognition and processing of DNA lesions. UvrC both incises the 5' and 3' sides of the lesion. The N-terminal half is responsible for the 3' incision and the C-terminal half is responsible for the 5' incision. The polypeptide is UvrABC system protein C (Anaeromyxobacter dehalogenans (strain 2CP-1 / ATCC BAA-258)).